The sequence spans 326 residues: Adenine deaminase (326 aa).

Residues His-14, His-16, and His-194 each contribute to the Zn(2+) site. Glu-197 acts as the Proton donor in catalysis. Position 275 (Asp-275) interacts with Zn(2+). Substrate is bound at residue Asp-276.

The protein belongs to the metallo-dependent hydrolases superfamily. Adenosine and AMP deaminases family. Adenine deaminase type 2 subfamily. Zn(2+) is required as a cofactor.

It catalyses the reaction adenine + H2O + H(+) = hypoxanthine + NH4(+). Catalyzes the hydrolytic deamination of adenine to hypoxanthine. Plays an important role in the purine salvage pathway and in nitrogen catabolism. This is Adenine deaminase from Crocosphaera subtropica (strain ATCC 51142 / BH68) (Cyanothece sp. (strain ATCC 51142)).